The following is a 113-amino-acid chain: Large ribosomal subunit protein uL22 (113 aa).

This sequence belongs to the universal ribosomal protein uL22 family. As to quaternary structure, part of the 50S ribosomal subunit.

Functionally, this protein binds specifically to 23S rRNA; its binding is stimulated by other ribosomal proteins, e.g. L4, L17, and L20. It is important during the early stages of 50S assembly. It makes multiple contacts with different domains of the 23S rRNA in the assembled 50S subunit and ribosome. Its function is as follows. The globular domain of the protein is located near the polypeptide exit tunnel on the outside of the subunit, while an extended beta-hairpin is found that lines the wall of the exit tunnel in the center of the 70S ribosome. In Neorickettsia sennetsu (strain ATCC VR-367 / Miyayama) (Ehrlichia sennetsu), this protein is Large ribosomal subunit protein uL22.